Here is a 241-residue protein sequence, read N- to C-terminus: Ribosomal RNA small subunit methyltransferase J (241 aa).

S-adenosyl-L-methionine is bound by residues 94–95 and Asp163; that span reads RD.

The protein belongs to the methyltransferase superfamily. RsmJ family.

It localises to the cytoplasm. It catalyses the reaction guanosine(1516) in 16S rRNA + S-adenosyl-L-methionine = N(2)-methylguanosine(1516) in 16S rRNA + S-adenosyl-L-homocysteine + H(+). Functionally, specifically methylates the guanosine in position 1516 of 16S rRNA. The sequence is that of Ribosomal RNA small subunit methyltransferase J from Francisella tularensis subsp. novicida (strain U112).